Reading from the N-terminus, the 6298-residue chain is Adhesion G-protein coupled receptor V1 (6298 aa).

Positions 1 to 28 are cleaved as a signal peptide; sequence MSVTSEPGMISSFLLVYLSTLFISFVFG. Calx-beta domains lie at 29-116, 132-236, 251-362, 389-489, 646-746, 764-862, 877-980, 994-1094, 1108-1208, 1440-1540, 1562-1662, 1706-1805, 1846-1948, 1962-2075, 2103-2202, 2218-2320, 2437-2537, 2576-2672, 2687-2786, 2810-2921, 2945-3044, and 3067-3167; these read EAEI…FHLT, ASVT…IQLR, VEII…IMLL, YGVL…LTIL, PAIA…TLSL, DLII…VILS, VNIT…IILL, ASLR…IVLF, ATVI…LRLV, AMPR…FLLK, QKSD…VTLV, TGLP…VELL, ILVT…VSIL, TLTI…IELF, HLVI…VQLL, VITI…VQLA, TLCL…FLIS, FIIY…VRLG, VTVN…VVLY, LTVE…VNLT, QIVI…LLLT, and DGPG…VCTL. The Extracellular segment spans residues 29-5901; that stretch reads EAEIRFTGQT…TDNSSSYNEA (5873 aa). EAR repeat units follow at residues 3251–3292, 3293–3341, 3344–3389, 3391–3435, 3437–3484, and 3488–3530; these read VFSI…RWQG, TFVP…MLTA, RLVL…RWNG, NFAW…TWSG, QFIN…VWEM, and SLRY…CWNS. 13 Calx-beta domains span residues 3581–3622, 3636–3736, 3772–3872, 3919–4003, 4017–4120, 4135–4235, 4251–4351, 4384–4484, 4507–4607, 4628–4728, 4989–5089, 5281–5325, and 5361–5461; these read QSDF…RVQL, SVRV…VVTL, GAVR…VTIA, GGVI…ISLV, VNVV…IELT, SVII…EFQL, ARIT…LAIT, RIII…ILLI, SPFG…IVQL, KFGD…AVQL, TTAE…INLT, AVEE…YVFL, and IGFS…FVEL. Positions 5740-5896 constitute a GAIN-B domain; it reads SILALHWNPQ…AVYAQTDNSS (157 aa). Disulfide bonds link C5849/C5878 and C5866/C5880. Positions 5849 to 5896 are GPS; that stretch reads CLLWNQAAASWLSDSQFCKVVEDASDYVECACSHMSVYAVYAQTDNSS. The chain crosses the membrane as a helical span at residues 5902–5922; that stretch reads FFSAGLICISGLCLAVVSHMF. The Cytoplasmic segment spans residues 5923-5932; the sequence is CARHSMFAAK. Residues 5933–5953 form a helical membrane-spanning segment; it reads LLTHMMVASLGTQILFLASAY. The Extracellular segment spans residues 5954–5973; the sequence is ASPHLSEESCSAVAAVAHYL. A helical transmembrane segment spans residues 5974-5994; it reads YLCQFSWMLIQSVNFWYVLVV. At 5995-6003 the chain is on the cytoplasmic side; it reads SDEHTERRC. The chain crosses the membrane as a helical span at residues 6004-6024; sequence LLFCLLSWGLPSFVVILLILI. Residues 6025–6052 are Extracellular-facing; it reads LRGIYHRSMPQIYGLIHGDLCFIPNIYA. A helical membrane pass occupies residues 6053 to 6073; that stretch reads ALFTAALVPLMCLVVVFVVFI. At 6074-6097 the chain is on the cytoplasmic side; the sequence is HAYQLKPQWKGYDDVFRGRTNAAE. The chain crosses the membrane as a helical span at residues 6098-6118; sequence IPLILYLFALISMTWLWGGLH. Residues 6119 to 6126 are Extracellular-facing; sequence MAYGHFWM. The chain crosses the membrane as a helical span at residues 6127–6147; sequence LVLFVIFNSLQGLYVFVVYFI. Over 6148 to 6298 the chain is Cytoplasmic; sequence LHNQTCCPMK…RRIPIADTHL (151 aa). Disordered stretches follow at residues 6206–6242 and 6264–6283; these read ERSSFQQTSQASPDLKTSPQNGASFPSSGGYGPGSLI and SVSDNESGQGSQEGGTLTDS. Polar residues-rich tracts occupy residues 6208–6226 and 6265–6283; these read SSFQQTSQASPDLKTSPQN and VSDNESGQGSQEGGTLTDS.

Belongs to the G-protein coupled receptor 2 family. Adhesion G-protein coupled receptor (ADGR) subfamily. As to quaternary structure, forms a heterodimer, consisting of a large extracellular region (alpha subunit) non-covalently linked to a seven-transmembrane moiety (beta subunit). Interacts (via the cytoplasmic region) with PDZD7. Component of USH2 complex, composed of ADGRV1, PDZD7, USH2A and WHRN. Interacts with USH2A and WHRN. Interacts (via the cytoplasmic region) with MYO7A (via MyTH4-FERM domains). Autoproteolytically cleaved into 2 subunits, an extracellular alpha subunit and a seven-transmembrane subunit. In terms of tissue distribution, expressed by oligodendrocytes. In midbrain, enriched in the myelinated regions of the superior and inferior colliculi. In the cochlea, expressed in developing hair cells. Expressed by photoreceptors in the retina.

Its subcellular location is the cell membrane. The protein resides in the cell projection. The protein localises to the stereocilium membrane. It localises to the photoreceptor inner segment. It is found in the secreted. In terms of biological role, G-protein coupled receptor which has an essential role in the development of hearing and vision. Couples to G-alpha(i)-proteins, GNAI1/2/3, G-alpha(q)-proteins, GNAQ, as well as G-alpha(s)-proteins, GNAS, inhibiting adenylate cyclase (AC) activity and cAMP production. Required for the hair bundle ankle formation, which connects growing stereocilia in developing cochlear hair cells of the inner ear. In response to extracellular calcium, activates kinases PKA and PKC to regulate myelination by inhibiting the ubiquitination of MAG, thus enhancing the stability of this protein in myelin-forming cells of the auditory pathway. In retina photoreceptors, the USH2 complex is required for the maintenance of periciliary membrane complex that seems to play a role in regulating intracellular protein transport. Involved in the regulation of bone metabolism. Cleaved ADGRV1 beta-subunit couples with G-alpha(i)-proteins, GNAI1/2/3, and constitutively inhibits adenylate cyclase (AC) activity with a stronger effect than full ADGRV1. This chain is Adhesion G-protein coupled receptor V1, found in Mus musculus (Mouse).